The chain runs to 142 residues: Type II secretion system core protein G (142 aa).

A propeptide spans 1–8 (MQRRQQSG) (leader sequence). At phenylalanine 9 the chain carries N-methylphenylalanine. A helical membrane pass occupies residues 9–29 (FTLIEIMVVVVILGILAALVV). Residues 121 to 142 (SLGADGKEGGSDNDADIGNWDN) form a disordered region.

The protein belongs to the GSP G family. In terms of assembly, type II secretion system is composed of four main components: the outer membrane complex, the inner membrane complex, the cytoplasmic secretion ATPase and the periplasm-spanning pseudopilus. Forms homomultimers. Interacts with pseudopilin tip ternary complex made of XcpX, XcpU, XcpV and XcpW. Interacts with PilA. In terms of processing, cleaved by the prepilin peptidase. Methylated by prepilin peptidase at the amino group of the N-terminal phenylalanine once the leader sequence is cleaved.

Its subcellular location is the cell inner membrane. In terms of biological role, core component of the type II secretion system required for the energy-dependent secretion of extracellular factors such as proteases and toxins from the periplasm. Pseudopilin (pilin-like) protein that polymerizes to form the pseudopilus. Further polymerization triggers pseudopilus growth. Type II pseudopilus confers increased bacterial adhesive capabilities. This Pseudomonas aeruginosa (strain ATCC 15692 / DSM 22644 / CIP 104116 / JCM 14847 / LMG 12228 / 1C / PRS 101 / PAO1) protein is Type II secretion system core protein G (xcpT).